Here is a 511-residue protein sequence, read N- to C-terminus: Phospho-2-dehydro-3-deoxyheptonate aldolase 2, chloroplastic (511 aa).

This sequence belongs to the class-II DAHP synthase family. Leaves, stems, tuber and roots.

The protein resides in the plastid. It localises to the chloroplast. It catalyses the reaction D-erythrose 4-phosphate + phosphoenolpyruvate + H2O = 7-phospho-2-dehydro-3-deoxy-D-arabino-heptonate + phosphate. It participates in metabolic intermediate biosynthesis; chorismate biosynthesis; chorismate from D-erythrose 4-phosphate and phosphoenolpyruvate: step 1/7. This chain is Phospho-2-dehydro-3-deoxyheptonate aldolase 2, chloroplastic (SHKB), found in Solanum tuberosum (Potato).